The following is a 142-amino-acid chain: Large ribosomal subunit protein uL13 (142 aa).

Belongs to the universal ribosomal protein uL13 family. Part of the 50S ribosomal subunit.

This protein is one of the early assembly proteins of the 50S ribosomal subunit, although it is not seen to bind rRNA by itself. It is important during the early stages of 50S assembly. This Halorhodospira halophila (strain DSM 244 / SL1) (Ectothiorhodospira halophila (strain DSM 244 / SL1)) protein is Large ribosomal subunit protein uL13.